A 279-amino-acid chain; its full sequence is uncharacterized protein (279 aa).

The N-terminal stretch at 1–19 is a signal peptide; it reads MKLKLYLIPLLASGIILSA. Residue Cys-20 is the site of N-palmitoyl cysteine attachment. The S-diacylglycerol cysteine moiety is linked to residue Cys-20.

This sequence belongs to the MG439/MG440 family.

The protein localises to the cell membrane. This is an uncharacterized protein from Mycoplasma pneumoniae (strain ATCC 29342 / M129 / Subtype 1) (Mycoplasmoides pneumoniae).